Consider the following 211-residue polypeptide: Peptidyl-prolyl cis-trans isomerase FKBP14 (211 aa).

The signal sequence occupies residues 1 to 19 (MRFFLWNAILALWVTVLSG). Cys-38 and Cys-96 are oxidised to a cystine. In terms of domain architecture, PPIase FKBP-type spans 45 to 135 (GDLMLVHYEG…IFNIDLLEIR (91 aa)). The region spanning 135–170 (RNGPRSHESFQEMDLNDDWRLSKHEVKVYLQKEFEK) is the EF-hand 1 domain. Positions 148, 150, 152, 154, and 159 each coordinate Ca(2+). The N-linked (GlcNAc...) asparagine glycan is linked to Asn-176. Residues 179 to 211 (HHDALVEDIFDKEDEDKDGFISAREFTYVHDEL) enclose the EF-hand 2 domain. Positions 192, 194, 196, and 203 each coordinate Ca(2+). A Prevents secretion from ER motif is present at residues 208-211 (HDEL).

Monomer. Homodimer. Interacts with type III, type IV and type X collagens.

The protein localises to the endoplasmic reticulum lumen. It carries out the reaction [protein]-peptidylproline (omega=180) = [protein]-peptidylproline (omega=0). Its activity is regulated as follows. Inhibited by tacrolimus/FK506. Its function is as follows. PPIase which accelerates the folding of proteins during protein synthesis. Has a preference for substrates containing 4-hydroxylproline modifications, including type III collagen. May also target type VI and type X collagens. This is Peptidyl-prolyl cis-trans isomerase FKBP14 (Fkbp14) from Mus musculus (Mouse).